The sequence spans 315 residues: MDIQWFATGVGAAVVLYIFYHFIRIILNILVPYAFCQPIDLKKKAGASWAVVTGATDGIGKSYSFELARRGFNVYIVSRTQSKLEQTKKDILEKQPDIEVRFATYDFTNPSVTDYEKLLSKLNEVSVGILINNVGMFFDYPEMLHKINGGIDSIANVIIINTLPATLLSAGILPQMVSRKAGIIVNIGSFAGVVKLAEWSIYSATKKYVEWLTGCLRKEYSHHGIIFQAITPAMVATKMAGNPNTSFFCPDSDTFARSALNTIGHASETTGYIAHQIQCEILKLLPDFVIDRSIKKGNAEFREKALAKSENKPLA.

47–76 (ASWAVVTGATDGIGKSYSFELARRGFNVYI) contributes to the NADP(+) binding site. Tyrosine 202 is an active-site residue.

The protein belongs to the short-chain dehydrogenases/reductases (SDR) family. 17-beta-HSD 3 subfamily.

The chain is Putative steroid dehydrogenase 2 (stdh-2) from Caenorhabditis elegans.